We begin with the raw amino-acid sequence, 431 residues long: Enolase (431 aa).

Gln-163 serves as a coordination point for (2R)-2-phosphoglycerate. The active-site Proton donor is the Glu-205. The Mg(2+) site is built by Asp-242, Glu-288, and Asp-315. (2R)-2-phosphoglycerate is bound by residues Lys-340, Arg-369, Ser-370, and Lys-391. The active-site Proton acceptor is Lys-340.

It belongs to the enolase family. Mg(2+) serves as cofactor.

It is found in the cytoplasm. The protein resides in the secreted. The protein localises to the cell surface. It carries out the reaction (2R)-2-phosphoglycerate = phosphoenolpyruvate + H2O. Its pathway is carbohydrate degradation; glycolysis; pyruvate from D-glyceraldehyde 3-phosphate: step 4/5. Its function is as follows. Catalyzes the reversible conversion of 2-phosphoglycerate (2-PG) into phosphoenolpyruvate (PEP). It is essential for the degradation of carbohydrates via glycolysis. This Acholeplasma laidlawii (strain PG-8A) protein is Enolase.